The following is a 2346-amino-acid chain: Acetyl-CoA carboxylase 1 (2346 aa).

M1 bears the N-acetylmethionine mark. Phosphoserine is present on residues S5, S23, S25, S29, S34, S48, S50, and S53. Phosphothreonine is present on T58. Phosphoserine occurs at positions 78 and 80. The region spanning 117–618 (VIEKVLIANN…DTGWLDRLIA (502 aa)) is the Biotin carboxylation domain. The 192-residue stretch at 275–466 (SKRILNVPQE…LPAAQLQIAM (192 aa)) folds into the ATP-grasp domain. 315-320 (GGGGKG) serves as a coordination point for ATP. Mg(2+)-binding residues include E424, E437, and N439. Mn(2+)-binding residues include E424, E437, and N439. The active site involves R441. S488 is subject to Phosphoserine. T610 is modified (phosphothreonine). Residues 745–819 (FEKENDPSVM…DPGCVLAKMQ (75 aa)) form the Biotinyl-binding domain. Position 786 is an N6-biotinyllysine (K786). A phosphoserine mark is found at S835, S1201, S1216, and S1218. A Phosphothreonine modification is found at T1227. A phosphoserine mark is found at S1259, S1263, and S1273. K1334 is modified (N6-acetyllysine). The CoA carboxyltransferase N-terminal domain occupies 1576 to 1914 (PYVTKDLLQS…SVHSSVPLLN (339 aa)). The segment at 1576–2234 (PYVTKDLLQS…EDLVKKKIHN (659 aa)) is carboxyltransferase. Residues R1823, K2127, and R2129 each coordinate CoA. The CoA carboxyltransferase C-terminal domain occupies 1918-2234 (PIDRIIEFVP…EDLVKKKIHN (317 aa)). Phosphothreonine is present on T2153.

As to quaternary structure, monomer, homodimer, and homotetramer. Can form filamentous polymers. Interacts in its inactive phosphorylated form with the BRCT domains of BRCA1 which prevents ACACA dephosphorylation and inhibits lipid synthesis. Interacts with MID1IP1; interaction with MID1IP1 promotes oligomerization and increases its activity. Mg(2+) serves as cofactor. Requires Mn(2+) as cofactor. It depends on biotin as a cofactor. In terms of processing, phosphorylation on Ser-1263 is required for interaction with BRCA1. Phosphorylation at Ser-80 by AMPK inactivates enzyme activity. Post-translationally, the biotin cofactor is covalently attached to the central biotinyl-binding domain and is required for the catalytic activity. Expressed in brain, placenta, skeletal muscle, renal, pancreatic and adipose tissues; expressed at low level in pulmonary tissue; not detected in the liver.

It is found in the cytoplasm. The protein localises to the cytosol. The enzyme catalyses hydrogencarbonate + acetyl-CoA + ATP = malonyl-CoA + ADP + phosphate + H(+). It functions in the pathway lipid metabolism; malonyl-CoA biosynthesis; malonyl-CoA from acetyl-CoA: step 1/1. Its activity is regulated as follows. Inhibited by phosphorylation. Citrate promotes oligomerization of the protein into filaments that correspond to the most active form of the carboxylase. Inhibited by palmitoyl-CoA. Cytosolic enzyme that catalyzes the carboxylation of acetyl-CoA to malonyl-CoA, the first and rate-limiting step of de novo fatty acid biosynthesis. This is a 2 steps reaction starting with the ATP-dependent carboxylation of the biotin carried by the biotin carboxyl carrier (BCC) domain followed by the transfer of the carboxyl group from carboxylated biotin to acetyl-CoA. The sequence is that of Acetyl-CoA carboxylase 1 from Homo sapiens (Human).